The primary structure comprises 296 residues: MPDPTSPKPDWLKVRLPRTDKYGAVKDVIKKYNLNTVCSSAMCPNAFECWDGGCLTFMVLGNTCTRACRFCTVTHGPAGEPLDSNEPQRLAAAAKELDLSYVVITSVDRDDLPDYGAGHYAACIRAVKEQLPGARVEAIIPDFTGRLDLLEQVVDARPDVISHNIETVERLSPSVRDRRAGYYRSLDVLRDVKRVNPHMLTKSSLLLGMGEEDIEIKEALHDLQEARVDIVTLGQYLRPSIRQWPVHRYVAPGEFSELAEYGRSLGFKYVAAGPFVRTSYRAGEQYVSVIADSRMA.

Cys-38, Cys-43, Cys-49, Cys-64, Cys-68, Cys-71, and Ser-279 together coordinate [4Fe-4S] cluster. The region spanning 50–268 (WDGGCLTFMV…AEYGRSLGFK (219 aa)) is the Radical SAM core domain.

This sequence belongs to the radical SAM superfamily. Lipoyl synthase family. [4Fe-4S] cluster is required as a cofactor.

Its subcellular location is the cytoplasm. It catalyses the reaction [[Fe-S] cluster scaffold protein carrying a second [4Fe-4S](2+) cluster] + N(6)-octanoyl-L-lysyl-[protein] + 2 oxidized [2Fe-2S]-[ferredoxin] + 2 S-adenosyl-L-methionine + 4 H(+) = [[Fe-S] cluster scaffold protein] + N(6)-[(R)-dihydrolipoyl]-L-lysyl-[protein] + 4 Fe(3+) + 2 hydrogen sulfide + 2 5'-deoxyadenosine + 2 L-methionine + 2 reduced [2Fe-2S]-[ferredoxin]. The protein operates within protein modification; protein lipoylation via endogenous pathway; protein N(6)-(lipoyl)lysine from octanoyl-[acyl-carrier-protein]: step 2/2. Catalyzes the radical-mediated insertion of two sulfur atoms into the C-6 and C-8 positions of the octanoyl moiety bound to the lipoyl domains of lipoate-dependent enzymes, thereby converting the octanoylated domains into lipoylated derivatives. The protein is Lipoyl synthase of Methanocella arvoryzae (strain DSM 22066 / NBRC 105507 / MRE50).